Reading from the N-terminus, the 424-residue chain is 3-ketoacyl-CoA thiolase, peroxisomal (424 aa).

The N-terminal 26 residues, 1-26, are a transit peptide targeting the peroxisome; the sequence is MQRLQVVLGHLRGPADSGWMPQAAPC. The PTS2-type peroxisomal targeting signal stretch occupies residues 1–26; the sequence is MQRLQVVLGHLRGPADSGWMPQAAPC. Phosphothreonine is present on residues threonine 59 and threonine 60. Cysteine 123 acts as the Acyl-thioester intermediate in catalysis. Catalysis depends on proton acceptor residues histidine 377 and cysteine 408.

The protein belongs to the thiolase-like superfamily. Thiolase family. Homodimer. Interacts (via PTS2-type peroxisomal targeting signal region) with PEX7; leading to its translocation into peroxisomes.

Its subcellular location is the peroxisome. The catalysed reaction is an acyl-CoA + acetyl-CoA = a 3-oxoacyl-CoA + CoA. It carries out the reaction 2 acetyl-CoA = acetoacetyl-CoA + CoA. It catalyses the reaction tetradecanoyl-CoA + acetyl-CoA = 3-oxohexadecanoyl-CoA + CoA. The enzyme catalyses hexanoyl-CoA + acetyl-CoA = 3-oxooctanoyl-CoA + CoA. The catalysed reaction is 3-oxohexadecanedioyl-CoA + CoA = tetradecanedioyl-CoA + acetyl-CoA. It carries out the reaction 3-oxo-(6Z,9Z,12Z,15Z,18Z,21Z)-tetracosahexaenoyl-CoA + CoA = (4Z,7Z,10Z,13Z,16Z,19Z)-docosahexaenoyl-CoA + acetyl-CoA. It functions in the pathway lipid metabolism; peroxisomal fatty acid beta-oxidation. In terms of biological role, responsible for the thiolytic cleavage of straight chain 3-keto fatty acyl-CoAs (3-oxoacyl-CoAs). Plays an important role in fatty acid peroxisomal beta-oxidation. Catalyzes the cleavage of short, medium, long, and very long straight chain 3-oxoacyl-CoAs. This Homo sapiens (Human) protein is 3-ketoacyl-CoA thiolase, peroxisomal.